Reading from the N-terminus, the 314-residue chain is Melanoma-associated antigen 12 (314 aa).

The span at Met-1–Glu-14 shows a compositional bias: basic and acidic residues. A disordered region spans residues Met-1–Pro-72. Positions Glu-17–Thr-44 are enriched in low complexity. Residues Leu-109–Ala-308 form the MAGE domain.

As to expression, expressed in many tumors of several types, such as melanoma, head and neck squamous cell carcinoma, lung carcinoma and breast carcinoma, but not in normal tissues except for testes.

Its function is as follows. Not known, though may play a role tumor transformation or progression. In vitro promotes cell viability in melanoma cell lines. The polypeptide is Melanoma-associated antigen 12 (MAGEA12) (Homo sapiens (Human)).